The following is a 516-amino-acid chain: Putative transposase y4bL/y4kJ/y4tB (516 aa).

The region spanning 15–96 (IRTILRLTHE…PDWALVVREL (82 aa)) is the HTH IS408-type domain. Positions 138–319 (FRNRHAAGAV…SRRELFEEIE (182 aa)) constitute an Integrase catalytic domain. Residues 493–516 (ERPQAEHAAPTPAHTNIRGRSYYQ) are disordered.

Belongs to the transposase IS21/IS408/IS1162 family.

The sequence is that of Putative transposase y4bL/y4kJ/y4tB from Sinorhizobium fredii (strain NBRC 101917 / NGR234).